Consider the following 224-residue polypeptide: MNSAWALLRLASPQLPIGGYSYSQGLEMAVEQSIVVDPQTAGRWISDQLLLNLARFEAPLLLAHCEAASAGDWGQLLQVSEQHRASRETRELHQESRQMGYSLQQLLNGLPELDRDARHFLEQTAEPHLALGWALAARAWQISPQDALAAWLWSWLENQLAVLMKTLPLGQQAAQRLTSELLPLLQQAQVNATRQDTHHAGSAAFGLSLASMAHERQYSRLFRS.

Belongs to the UreF family. As to quaternary structure, ureD, UreF and UreG form a complex that acts as a GTP-hydrolysis-dependent molecular chaperone, activating the urease apoprotein by helping to assemble the nickel containing metallocenter of UreC. The UreE protein probably delivers the nickel.

It is found in the cytoplasm. Required for maturation of urease via the functional incorporation of the urease nickel metallocenter. This Pseudomonas savastanoi pv. phaseolicola (strain 1448A / Race 6) (Pseudomonas syringae pv. phaseolicola (strain 1448A / Race 6)) protein is Urease accessory protein UreF.